A 368-amino-acid chain; its full sequence is Quinolinate synthase (368 aa).

Iminosuccinate-binding residues include His46 and Ser63. [4Fe-4S] cluster is bound at residue Cys110. Iminosuccinate-binding positions include 141–143 (YVN) and Ser162. Position 230 (Cys230) interacts with [4Fe-4S] cluster. Iminosuccinate-binding positions include 256–258 (HPE) and Thr273. Cys320 is a [4Fe-4S] cluster binding site.

The protein belongs to the quinolinate synthase family. Type 3 subfamily. Requires [4Fe-4S] cluster as cofactor.

It localises to the cytoplasm. It carries out the reaction iminosuccinate + dihydroxyacetone phosphate = quinolinate + phosphate + 2 H2O + H(+). It functions in the pathway cofactor biosynthesis; NAD(+) biosynthesis; quinolinate from iminoaspartate: step 1/1. Its function is as follows. Catalyzes the condensation of iminoaspartate with dihydroxyacetone phosphate to form quinolinate. The protein is Quinolinate synthase of Bacillus anthracis (strain A0248).